The sequence spans 364 residues: MFEAVEEVLREYADLERRLADPAVHADPRTARTLGRRYAQLGPIVEAYRRWKALDADVAAAHELAAADPAFRAEIPALEAEREAVAERLRSLLAPADPNDGKDVIMQIKAGEGGEESALFAGDLLRMYLRYAERRGWKTEILDATESDLGGYKDVTVAIRADGSEGAWSRLKFEGGVHRVQRVPVTESQGRIHTSAVGVLVMPEAEEVDVQIDPNDLRIDVFRSSGPGGQSVNTTDSAVRITHLPTGIVVSCQNEKSQLQNKETALRILRSRLLALAQEEAEAQAAAQRRSQVRTVDRSERIRTYNFPENRISDHRVNYKAYNLDQVLDGDLDGVIQALVDADAAARLAAAEQDPTRPVLSRQR.

The residue at position 230 (Gln-230) is an N5-methylglutamine.

This sequence belongs to the prokaryotic/mitochondrial release factor family. Methylated by PrmC. Methylation increases the termination efficiency of RF1.

Its subcellular location is the cytoplasm. Peptide chain release factor 1 directs the termination of translation in response to the peptide chain termination codons UAG and UAA. In Acidothermus cellulolyticus (strain ATCC 43068 / DSM 8971 / 11B), this protein is Peptide chain release factor 1.